Consider the following 501-residue polypeptide: Cytochrome P450 4c21 (501 aa).

Residues glutamate 309 and cysteine 447 each coordinate heme.

This sequence belongs to the cytochrome P450 family. The cofactor is heme.

It localises to the endoplasmic reticulum membrane. It is found in the microsome membrane. It carries out the reaction an organic molecule + reduced [NADPH--hemoprotein reductase] + O2 = an alcohol + oxidized [NADPH--hemoprotein reductase] + H2O + H(+). This is Cytochrome P450 4c21 (CYP4C21) from Blattella germanica (German cockroach).